Consider the following 49-residue polypeptide: Large ribosomal subunit protein bL33B (49 aa).

It belongs to the bacterial ribosomal protein bL33 family.

This chain is Large ribosomal subunit protein bL33B, found in Bacillus cereus (strain ATCC 14579 / DSM 31 / CCUG 7414 / JCM 2152 / NBRC 15305 / NCIMB 9373 / NCTC 2599 / NRRL B-3711).